The following is a 63-amino-acid chain: Large ribosomal subunit protein bL35 (63 aa).

Composition is skewed to basic residues over residues 1-25 (MPKM…KHRQ) and 32-47 (LTKK…RPKK). A disordered region spans residues 1-55 (MPKMKSKSSAAKRFKKTANGFKHRQSFTSHILTKKSTKRKRHLRPKKQVNPSDVP).

Belongs to the bacterial ribosomal protein bL35 family.

In Hahella chejuensis (strain KCTC 2396), this protein is Large ribosomal subunit protein bL35.